The chain runs to 207 residues: Small ribosomal subunit protein uS4 (207 aa).

A disordered region spans residues 32–55 (CKLDSKPGQHGRTSGARTSDYGTQ). Positions 42–53 (GRTSGARTSDYG) are enriched in polar residues. One can recognise an S4 RNA-binding domain in the interval 97 to 158 (SRLDNVVYRM…TKKKQARILE (62 aa)).

This sequence belongs to the universal ribosomal protein uS4 family. As to quaternary structure, part of the 30S ribosomal subunit. Contacts protein S5. The interaction surface between S4 and S5 is involved in control of translational fidelity.

One of the primary rRNA binding proteins, it binds directly to 16S rRNA where it nucleates assembly of the body of the 30S subunit. Functionally, with S5 and S12 plays an important role in translational accuracy. The protein is Small ribosomal subunit protein uS4 of Paraburkholderia phytofirmans (strain DSM 17436 / LMG 22146 / PsJN) (Burkholderia phytofirmans).